The sequence spans 403 residues: Aspartic protease PEP1 (403 aa).

The signal sequence occupies residues 1–20 (MVQISQIGAVLAVCSTLTVA). Residues 21 to 67 (APTKGKARFNVPQVAVPMKAVHHPAVAYARALHKFGMKVPKAVSDAA) constitute a propeptide, activation peptide. The Peptidase A1 domain maps to 82 to 400 (YVTQVTVGQG…DTEGPRIGFA (319 aa)). The active site involves Asp-98. Asn-159 and Asn-270 each carry an N-linked (GlcNAc...) asparagine glycan. The active site involves Asp-293. A disulfide bridge connects residues Cys-329 and Cys-361.

This sequence belongs to the peptidase A1 family.

Its subcellular location is the secreted. It carries out the reaction Hydrolysis of proteins with broad specificity. Generally favors hydrophobic residues in P1 and P1', but also accepts Lys in P1, which leads to activation of trypsinogen. Does not clot milk.. Secreted aspartic endopeptidase that allows assimilation of proteinaceous substrates. Can catalyze hydrolysis of the major structural proteins of basement membrane, elastin, collagen, and laminin. Thought to play a significant role in virulence. The sequence is that of Aspartic protease PEP1 (PEP1) from Arthroderma benhamiae (strain ATCC MYA-4681 / CBS 112371) (Trichophyton mentagrophytes).